The following is a 334-amino-acid chain: FAD:protein FMN transferase (334 aa).

Positions 1–16 (MRNWLVALASLLLLAG) are cleaved as a signal peptide. A lipid anchor (N-palmitoyl cysteine) is attached at Cys17. The S-diacylglycerol cysteine moiety is linked to residue Cys17. FAD-binding positions include Met31, Tyr69, 110–112 (ALD), and Asp168. Thr171 is a Mg(2+) binding site. Positions 174 and 259 each coordinate FAD. 2 residues coordinate Mg(2+): Asp285 and Thr289.

It belongs to the ApbE family. It depends on Mg(2+) as a cofactor.

It localises to the cell inner membrane. The enzyme catalyses L-threonyl-[protein] + FAD = FMN-L-threonyl-[protein] + AMP + H(+). In terms of biological role, flavin transferase that catalyzes the transfer of the FMN moiety of FAD and its covalent binding to the hydroxyl group of a threonine residue in a target flavoprotein such as NqrB and NqrC, two subunits of the NQR complex. Cannot use directly FMN instead of FAD as substrate. The chain is FAD:protein FMN transferase from Vibrio cholerae serotype O1 (strain ATCC 39541 / Classical Ogawa 395 / O395).